The primary structure comprises 212 residues: Ribosomal RNA small subunit methyltransferase G (212 aa).

S-adenosyl-L-methionine-binding positions include G76, M81, 127–128 (VE), and R145.

Belongs to the methyltransferase superfamily. RNA methyltransferase RsmG family.

Its subcellular location is the cytoplasm. It catalyses the reaction guanosine(527) in 16S rRNA + S-adenosyl-L-methionine = N(7)-methylguanosine(527) in 16S rRNA + S-adenosyl-L-homocysteine. Its function is as follows. Specifically methylates the N7 position of guanine in position 527 of 16S rRNA. The chain is Ribosomal RNA small subunit methyltransferase G from Acinetobacter baylyi (strain ATCC 33305 / BD413 / ADP1).